The following is a 117-amino-acid chain: Large ribosomal subunit protein bL20 (117 aa).

Belongs to the bacterial ribosomal protein bL20 family.

Functionally, binds directly to 23S ribosomal RNA and is necessary for the in vitro assembly process of the 50S ribosomal subunit. It is not involved in the protein synthesizing functions of that subunit. This is Large ribosomal subunit protein bL20 from Limosilactobacillus reuteri (strain DSM 20016) (Lactobacillus reuteri).